A 314-amino-acid polypeptide reads, in one-letter code: MANVTLVTGFLLMGFSNIQKLRILYGVLFLLIYLAALMSNLLIITLITLDVKLQTPMYFFLKNLSFLDVFLVSVPIPKFIVNNLTHNNSISILGCAFQLLLMTSFSAGEIFILTAMSYDRYVAICCPLNYEVIMNTGVCVLMASVSWAIGGLFGTAYTAGTFSMPFCGSSVIPQFFCDVPSLLRISCSETLMVIYAGIGVGACLSISCFICIVISYIYIFSTVLKIPTTKGQSKAFSTCFPHLTVFTVFIITAYFVYLKPPSNSPSVIDRLLSVIYTVMPPVFNPVTYSLRNNDMKCALIRLLQKTYGQEAYFI.

The Extracellular segment spans residues 1–26; that stretch reads MANVTLVTGFLLMGFSNIQKLRILYG. The N-linked (GlcNAc...) asparagine glycan is linked to N3. The helical transmembrane segment at 27-47 threads the bilayer; the sequence is VLFLLIYLAALMSNLLIITLI. Over 48 to 55 the chain is Cytoplasmic; sequence TLDVKLQT. The helical transmembrane segment at 56 to 76 threads the bilayer; it reads PMYFFLKNLSFLDVFLVSVPI. At 77–91 the chain is on the extracellular side; that stretch reads PKFIVNNLTHNNSIS. N83 is a glycosylation site (N-linked (GlcNAc...) asparagine). The helical transmembrane segment at 92-112 threads the bilayer; that stretch reads ILGCAFQLLLMTSFSAGEIFI. A disulfide bridge connects residues C95 and C177. Residues 113-136 lie on the Cytoplasmic side of the membrane; the sequence is LTAMSYDRYVAICCPLNYEVIMNT. The chain crosses the membrane as a helical span at residues 137–157; the sequence is GVCVLMASVSWAIGGLFGTAY. Residues 158 to 193 are Extracellular-facing; that stretch reads TAGTFSMPFCGSSVIPQFFCDVPSLLRISCSETLMV. Residues 194–214 form a helical membrane-spanning segment; it reads IYAGIGVGACLSISCFICIVI. At 215–237 the chain is on the cytoplasmic side; that stretch reads SYIYIFSTVLKIPTTKGQSKAFS. The chain crosses the membrane as a helical span at residues 238–258; it reads TCFPHLTVFTVFIITAYFVYL. The Extracellular segment spans residues 259 to 267; it reads KPPSNSPSV. Residues 268–290 traverse the membrane as a helical segment; it reads IDRLLSVIYTVMPPVFNPVTYSL. Topologically, residues 291 to 314 are cytoplasmic; the sequence is RNNDMKCALIRLLQKTYGQEAYFI.

Belongs to the G-protein coupled receptor 1 family.

Its subcellular location is the cell membrane. Its function is as follows. Odorant receptor. The protein is Olfactory receptor 14A2 (OR14A2) of Homo sapiens (Human).